The sequence spans 505 residues: 2-methylcitrate dehydratase (505 aa).

Belongs to the PrpD family. As to quaternary structure, monomer.

The catalysed reaction is (2S,3S)-2-methylcitrate = 2-methyl-cis-aconitate + H2O. It carries out the reaction citrate = D-threo-isocitrate. It participates in organic acid metabolism; propanoate degradation. It functions in the pathway carbohydrate metabolism; tricarboxylic acid cycle; isocitrate from oxaloacetate: step 1/2. Its function is as follows. Involved in the catabolism of short chain fatty acids (SCFA) via the tricarboxylic acid (TCA)(acetyl degradation route) and via the 2-methylcitrate cycle I (propionate degradation route). Catalyzes the dehydration of 2-methylcitrate (2-MC) to yield the cis isomer of 2-methyl-aconitate. Could also catalyze the dehydration of citrate and the hydration of cis-aconitate. The protein is 2-methylcitrate dehydratase of Mycobacterium tuberculosis (strain ATCC 35801 / TMC 107 / Erdman).